Here is a 312-residue protein sequence, read N- to C-terminus: Glyoxylate/hydroxypyruvate reductase A (312 aa).

Arg227 is a catalytic residue. The active-site Proton donor is the His275.

It belongs to the D-isomer specific 2-hydroxyacid dehydrogenase family. GhrA subfamily.

Its subcellular location is the cytoplasm. The catalysed reaction is glycolate + NADP(+) = glyoxylate + NADPH + H(+). It catalyses the reaction (R)-glycerate + NAD(+) = 3-hydroxypyruvate + NADH + H(+). The enzyme catalyses (R)-glycerate + NADP(+) = 3-hydroxypyruvate + NADPH + H(+). Functionally, catalyzes the NADPH-dependent reduction of glyoxylate and hydroxypyruvate into glycolate and glycerate, respectively. This Escherichia coli (strain 55989 / EAEC) protein is Glyoxylate/hydroxypyruvate reductase A.